The chain runs to 178 residues: Nascent polypeptide-associated complex subunit alpha (178 aa).

The region spanning 16–80 is the NAC-A/B domain; it reads PKNEKKAREL…AKVDDMNQRI (65 aa). Residues 82–100 show a composition bias toward low complexity; sequence EAQAQQAQQEALQKAAADA. Residues 82–145 form a disordered region; sequence EAQAQQAQQE…DETGLDPKDI (64 aa). The segment covering 101–126 has biased composition (basic and acidic residues); sequence GKTEDKSPEAITADLEKASLGDKKAE. Positions 127-139 are enriched in acidic residues; sequence DEEEDEGEIDETG. One can recognise a UBA domain in the interval 140-178; that stretch reads LDPKDIEIVVEQTQVSRAKAVKALRNHDGDMVNAIMDLS.

The protein belongs to the NAC-alpha family. Part of the nascent polypeptide-associated complex (NAC), consisting of EGD2 and EGD1. NAC associates with ribosomes via EGD1.

It localises to the cytoplasm. The protein resides in the nucleus. Functionally, component of the nascent polypeptide-associated complex (NAC), a dynamic component of the ribosomal exit tunnel, protecting the emerging polypeptides from interaction with other cytoplasmic proteins to ensure appropriate nascent protein targeting. The NAC complex also promotes mitochondrial protein import by enhancing productive ribosome interactions with the outer mitochondrial membrane and blocks the inappropriate interaction of ribosomes translating non-secretory nascent polypeptides with translocation sites in the membrane of the endoplasmic reticulum. EGD2 may also be involved in transcription regulation. This chain is Nascent polypeptide-associated complex subunit alpha (EGD2), found in Candida albicans (strain SC5314 / ATCC MYA-2876) (Yeast).